Here is a 263-residue protein sequence, read N- to C-terminus: UPF0739 protein C1orf74 homolog (263 aa).

This sequence belongs to the UPF0739 family.

In Mus musculus (Mouse), this protein is UPF0739 protein C1orf74 homolog.